The following is a 437-amino-acid chain: CCA-adding enzyme (437 aa).

ATP contacts are provided by Ser50 and Lys53. Residues Ser50 and Lys53 each coordinate CTP. Positions 61, 63, and 112 each coordinate Mg(2+). ATP is bound by residues His135, Lys155, and Tyr164. Positions 135, 155, and 164 each coordinate CTP.

This sequence belongs to the tRNA nucleotidyltransferase/poly(A) polymerase family. Archaeal CCA-adding enzyme subfamily. As to quaternary structure, homodimer. Mg(2+) serves as cofactor.

It carries out the reaction a tRNA precursor + 2 CTP + ATP = a tRNA with a 3' CCA end + 3 diphosphate. It catalyses the reaction a tRNA with a 3' CCA end + 2 CTP + ATP = a tRNA with a 3' CCACCA end + 3 diphosphate. Functionally, catalyzes the addition and repair of the essential 3'-terminal CCA sequence in tRNAs without using a nucleic acid template. Adds these three nucleotides in the order of C, C, and A to the tRNA nucleotide-73, using CTP and ATP as substrates and producing inorganic pyrophosphate. tRNA 3'-terminal CCA addition is required both for tRNA processing and repair. Also involved in tRNA surveillance by mediating tandem CCA addition to generate a CCACCA at the 3' terminus of unstable tRNAs. While stable tRNAs receive only 3'-terminal CCA, unstable tRNAs are marked with CCACCA and rapidly degraded. This is CCA-adding enzyme from Thermoplasma volcanium (strain ATCC 51530 / DSM 4299 / JCM 9571 / NBRC 15438 / GSS1).